The primary structure comprises 290 residues: Shikimate dehydrogenase (NADP(+)) (290 aa).

Shikimate contacts are provided by residues 22-24 and T68; that span reads SLS. The active-site Proton acceptor is K72. N93 and D108 together coordinate shikimate. NADP(+)-binding positions include 133–137 and I228; that span reads GSGGS. Y230 lines the shikimate pocket. G251 lines the NADP(+) pocket.

The protein belongs to the shikimate dehydrogenase family. As to quaternary structure, homodimer.

It carries out the reaction shikimate + NADP(+) = 3-dehydroshikimate + NADPH + H(+). It functions in the pathway metabolic intermediate biosynthesis; chorismate biosynthesis; chorismate from D-erythrose 4-phosphate and phosphoenolpyruvate: step 4/7. In terms of biological role, involved in the biosynthesis of the chorismate, which leads to the biosynthesis of aromatic amino acids. Catalyzes the reversible NADPH linked reduction of 3-dehydroshikimate (DHSA) to yield shikimate (SA). The sequence is that of Shikimate dehydrogenase (NADP(+)) from Leptospira borgpetersenii serovar Hardjo-bovis (strain JB197).